A 401-amino-acid chain; its full sequence is Imidazolonepropionase (401 aa).

Residues His70 and His72 each coordinate Fe(3+). Zn(2+)-binding residues include His70 and His72. 3 residues coordinate 4-imidazolone-5-propanoate: Arg79, Tyr142, and His175. Tyr142 lines the N-formimidoyl-L-glutamate pocket. His238 lines the Fe(3+) pocket. His238 serves as a coordination point for Zn(2+). Gln241 is a binding site for 4-imidazolone-5-propanoate. Asp313 lines the Fe(3+) pocket. Asp313 is a Zn(2+) binding site. N-formimidoyl-L-glutamate-binding residues include Asn315 and Gly317. Thr318 contributes to the 4-imidazolone-5-propanoate binding site.

The protein belongs to the metallo-dependent hydrolases superfamily. HutI family. The cofactor is Zn(2+). It depends on Fe(3+) as a cofactor.

The protein resides in the cytoplasm. It carries out the reaction 4-imidazolone-5-propanoate + H2O = N-formimidoyl-L-glutamate. It participates in amino-acid degradation; L-histidine degradation into L-glutamate; N-formimidoyl-L-glutamate from L-histidine: step 3/3. In terms of biological role, catalyzes the hydrolytic cleavage of the carbon-nitrogen bond in imidazolone-5-propanoate to yield N-formimidoyl-L-glutamate. It is the third step in the universal histidine degradation pathway. This Xanthomonas axonopodis pv. citri (strain 306) protein is Imidazolonepropionase.